Here is an 833-residue protein sequence, read N- to C-terminus: Leucine--tRNA ligase (833 aa).

The 'HIGH' region signature appears at Pro41 to His52. The 'KMSKS' region motif lies at Lys610–Ser614. Lys613 serves as a coordination point for ATP.

This sequence belongs to the class-I aminoacyl-tRNA synthetase family.

It localises to the cytoplasm. It catalyses the reaction tRNA(Leu) + L-leucine + ATP = L-leucyl-tRNA(Leu) + AMP + diphosphate. The protein is Leucine--tRNA ligase of Streptococcus thermophilus (strain CNRZ 1066).